The chain runs to 252 residues: 3-dehydroquinate dehydratase (252 aa).

Residues serine 21, 46-48, and arginine 82 each bind 3-dehydroquinate; that span reads EWR. Histidine 143 (proton donor/acceptor) is an active-site residue. The active-site Schiff-base intermediate with substrate is lysine 170. Residues arginine 213, serine 232, and glutamine 236 each contribute to the 3-dehydroquinate site.

Belongs to the type-I 3-dehydroquinase family. Homodimer.

It catalyses the reaction 3-dehydroquinate = 3-dehydroshikimate + H2O. The protein operates within metabolic intermediate biosynthesis; chorismate biosynthesis; chorismate from D-erythrose 4-phosphate and phosphoenolpyruvate: step 3/7. Functionally, involved in the third step of the chorismate pathway, which leads to the biosynthesis of aromatic amino acids. Catalyzes the cis-dehydration of 3-dehydroquinate (DHQ) and introduces the first double bond of the aromatic ring to yield 3-dehydroshikimate. This Escherichia coli (strain SE11) protein is 3-dehydroquinate dehydratase.